A 127-amino-acid polypeptide reads, in one-letter code: Protein chibby homolog 1 (127 aa).

Residues 1-25 (MPLFGSIFSPKKTPPRKSASLSNLH) are disordered. Phosphoserine is present on residues serine 9 and serine 20. The minimal region for the interaction with PKD2 stretch occupies residues 60–112 (VADSVISGGVDRRETQRLRKRNQQLEEENNLLRLKVDILLDMLSETTAESHLK). Residues 68-110 (GVDRRETQRLRKRNQQLEEENNLLRLKVDILLDMLSETTAESH) are a coiled coil. The interval 77–98 (LRKRNQQLEEENNLLRLKVDIL) is leucine-zipper; mediates homodimerization.

It belongs to the chibby family. In terms of assembly, homodimer. Homodimerization is essential for nuclear localization and interaction with KPNA4 but is dispensable for interaction with CTNNB1. Interacts with polycystin-2/PKD2 and GM130. Interacts with the C-terminal region of CTNNB1. Interacts (C-terminus) with TCIM (C-terminus), TCIM competes with CTNNB1 for the interaction with CBY1. Interacts with FAM92A; this interaction facilitates targeting of FAM92A to cilium basal body. Interacts with CIBAR2. Interacts with KPNA4.

The protein localises to the nucleus speckle. The protein resides in the cytoplasm. Its subcellular location is the cytoskeleton. It is found in the cilium basal body. It localises to the microtubule organizing center. The protein localises to the centrosome. The protein resides in the centriole. Its subcellular location is the golgi apparatus. It is found in the trans-Golgi network. It localises to the cell projection. The protein localises to the cilium. The protein resides in the flagellum. Its subcellular location is the nucleus. Functionally, inhibits the Wnt/Wingless pathway by binding to CTNNB1/beta-catenin and inhibiting beta-catenin-mediated transcriptional activation through competition with TCF/LEF transcription factors. Has also been shown to play a role in regulating the intracellular trafficking of polycystin-2/PKD2 and possibly of other intracellular proteins. Promotes adipocyte and cardiomyocyte differentiation. This chain is Protein chibby homolog 1 (Cby1), found in Rattus norvegicus (Rat).